The following is a 309-amino-acid chain: Protein FdhE homolog (309 aa).

This sequence belongs to the FdhE family.

The protein localises to the cytoplasm. Its function is as follows. Necessary for formate dehydrogenase activity. The protein is Protein FdhE homolog of Serratia proteamaculans (strain 568).